Reading from the N-terminus, the 552-residue chain is Chaperonin GroEL (552 aa).

ATP contacts are provided by residues 30–33 (TLGP), lysine 51, 87–91 (DGTTT), glycine 415, 480–482 (NAA), and aspartate 496.

This sequence belongs to the chaperonin (HSP60) family. Forms a cylinder of 14 subunits composed of two heptameric rings stacked back-to-back. Interacts with the co-chaperonin GroES.

The protein localises to the cytoplasm. The catalysed reaction is ATP + H2O + a folded polypeptide = ADP + phosphate + an unfolded polypeptide.. In terms of biological role, together with its co-chaperonin GroES, plays an essential role in assisting protein folding. The GroEL-GroES system forms a nano-cage that allows encapsulation of the non-native substrate proteins and provides a physical environment optimized to promote and accelerate protein folding. The protein is Chaperonin GroEL of Coxiella burnetii (strain RSA 331 / Henzerling II).